Reading from the N-terminus, the 333-residue chain is Ribosomal RNA small subunit methyltransferase H (333 aa).

S-adenosyl-L-methionine-binding positions include 42 to 44 (GGH), aspartate 62, phenylalanine 86, aspartate 105, and glutamine 112.

This sequence belongs to the methyltransferase superfamily. RsmH family.

The protein localises to the cytoplasm. It carries out the reaction cytidine(1402) in 16S rRNA + S-adenosyl-L-methionine = N(4)-methylcytidine(1402) in 16S rRNA + S-adenosyl-L-homocysteine + H(+). Functionally, specifically methylates the N4 position of cytidine in position 1402 (C1402) of 16S rRNA. This chain is Ribosomal RNA small subunit methyltransferase H, found in Cupriavidus necator (strain ATCC 17699 / DSM 428 / KCTC 22496 / NCIMB 10442 / H16 / Stanier 337) (Ralstonia eutropha).